Here is a 294-residue protein sequence, read N- to C-terminus: Uracil-DNA glycosylase (294 aa).

D139 functions as the Proton acceptor in the catalytic mechanism.

The protein belongs to the uracil-DNA glycosylase (UDG) superfamily. UNG family.

It is found in the host nucleus. It catalyses the reaction Hydrolyzes single-stranded DNA or mismatched double-stranded DNA and polynucleotides, releasing free uracil.. Functionally, excises uracil residues from the DNA which can arise as a result of misincorporation of dUMP residues by DNA polymerase or deamination of cytosines. Therefore may reduce deleterious uracil incorporation into the viral genome, particularly in terminally differentiated cells which lack DNA repair enzymes. In Human herpesvirus 2 (strain 333) (HHV-2), this protein is Uracil-DNA glycosylase (UL2).